A 272-amino-acid chain; its full sequence is Carbonic anhydrase (272 aa).

Zn(2+) is bound by residues Cys39, His98, and Cys101.

The protein belongs to the beta-class carbonic anhydrase family. As to quaternary structure, a hexamer formed by a trimer of dimers. Purified from carboxysomes with the both RuBisCO subunits and the full-length form of CcmM, probably interacts with the N-terminus of CcmM. Zn(2+) is required as a cofactor.

It localises to the carboxysome. The enzyme catalyses hydrogencarbonate + H(+) = CO2 + H2O. Reversible hydration of carbon dioxide. Essential to photosynthetic carbon dioxide fixation, supplies CO(2) to RuBisCO (ribulose bisphosphate carboxylase, rbcL-rbcS) in the carboxysome. Loss of activity results in limitation of CO(2) availability to RuBisCO located in the cytoplasm. In Synechococcus elongatus (strain ATCC 33912 / PCC 7942 / FACHB-805) (Anacystis nidulans R2), this protein is Carbonic anhydrase.